Here is a 180-residue protein sequence, read N- to C-terminus: Nucleoside triphosphate/diphosphate phosphatase (180 aa).

The active-site Proton donor is the Arg26. Residues Asn90, Asp106, Asp108, Asp110, Asp123, and Glu126 each contribute to the Mg(2+) site.

Belongs to the Ntdp family. Mg(2+) serves as cofactor.

The enzyme catalyses a ribonucleoside 5'-triphosphate + H2O = a ribonucleoside 5'-diphosphate + phosphate + H(+). The catalysed reaction is a ribonucleoside 5'-diphosphate + H2O = a ribonucleoside 5'-phosphate + phosphate + H(+). Has nucleoside phosphatase activity towards nucleoside triphosphates and nucleoside diphosphates. This Staphylococcus aureus (strain MSSA476) protein is Nucleoside triphosphate/diphosphate phosphatase.